We begin with the raw amino-acid sequence, 383 residues long: Succinate--CoA ligase [ADP-forming] subunit beta (383 aa).

Residues 9 to 241 (KEVLHKFNVS…YDEEVKEEIE (233 aa)) enclose the ATP-grasp domain. ATP-binding positions include K46, 53 to 55 (GRG), E99, S102, and E107. Mg(2+)-binding residues include N196 and D210. Residues N261 and 318–320 (GIM) each bind substrate.

It belongs to the succinate/malate CoA ligase beta subunit family. As to quaternary structure, heterotetramer of two alpha and two beta subunits. Mg(2+) serves as cofactor.

It carries out the reaction succinate + ATP + CoA = succinyl-CoA + ADP + phosphate. It catalyses the reaction GTP + succinate + CoA = succinyl-CoA + GDP + phosphate. Its pathway is carbohydrate metabolism; tricarboxylic acid cycle; succinate from succinyl-CoA (ligase route): step 1/1. Its function is as follows. Succinyl-CoA synthetase functions in the citric acid cycle (TCA), coupling the hydrolysis of succinyl-CoA to the synthesis of either ATP or GTP and thus represents the only step of substrate-level phosphorylation in the TCA. The beta subunit provides nucleotide specificity of the enzyme and binds the substrate succinate, while the binding sites for coenzyme A and phosphate are found in the alpha subunit. In Wolbachia sp. subsp. Drosophila simulans (strain wRi), this protein is Succinate--CoA ligase [ADP-forming] subunit beta.